The primary structure comprises 93 residues: Pyrimidine/purine nucleoside phosphorylase (93 aa).

This sequence belongs to the nucleoside phosphorylase PpnP family.

The catalysed reaction is a purine D-ribonucleoside + phosphate = a purine nucleobase + alpha-D-ribose 1-phosphate. It carries out the reaction adenosine + phosphate = alpha-D-ribose 1-phosphate + adenine. It catalyses the reaction cytidine + phosphate = cytosine + alpha-D-ribose 1-phosphate. The enzyme catalyses guanosine + phosphate = alpha-D-ribose 1-phosphate + guanine. The catalysed reaction is inosine + phosphate = alpha-D-ribose 1-phosphate + hypoxanthine. It carries out the reaction thymidine + phosphate = 2-deoxy-alpha-D-ribose 1-phosphate + thymine. It catalyses the reaction uridine + phosphate = alpha-D-ribose 1-phosphate + uracil. The enzyme catalyses xanthosine + phosphate = alpha-D-ribose 1-phosphate + xanthine. Functionally, catalyzes the phosphorolysis of diverse nucleosides, yielding D-ribose 1-phosphate and the respective free bases. Can use uridine, adenosine, guanosine, cytidine, thymidine, inosine and xanthosine as substrates. Also catalyzes the reverse reactions. The polypeptide is Pyrimidine/purine nucleoside phosphorylase (Aliivibrio fischeri (strain ATCC 700601 / ES114) (Vibrio fischeri)).